A 445-amino-acid chain; its full sequence is Phosphoglucosamine mutase (445 aa).

Serine 103 serves as the catalytic Phosphoserine intermediate. Mg(2+) is bound by residues serine 103, aspartate 240, aspartate 242, and aspartate 244. Residue serine 103 is modified to Phosphoserine.

Belongs to the phosphohexose mutase family. It depends on Mg(2+) as a cofactor. Post-translationally, activated by phosphorylation.

The catalysed reaction is alpha-D-glucosamine 1-phosphate = D-glucosamine 6-phosphate. Catalyzes the conversion of glucosamine-6-phosphate to glucosamine-1-phosphate. This Cellvibrio japonicus (strain Ueda107) (Pseudomonas fluorescens subsp. cellulosa) protein is Phosphoglucosamine mutase.